The primary structure comprises 511 residues: Maturase K (511 aa).

The protein belongs to the intron maturase 2 family. MatK subfamily.

Its subcellular location is the plastid. It localises to the chloroplast. In terms of biological role, usually encoded in the trnK tRNA gene intron. Probably assists in splicing its own and other chloroplast group II introns. The polypeptide is Maturase K (Acorus calamus var. americanus (American sweet flag)).